We begin with the raw amino-acid sequence, 213 residues long: Probable nicotinate-nucleotide adenylyltransferase (213 aa).

The protein belongs to the NadD family.

It catalyses the reaction nicotinate beta-D-ribonucleotide + ATP + H(+) = deamido-NAD(+) + diphosphate. It functions in the pathway cofactor biosynthesis; NAD(+) biosynthesis; deamido-NAD(+) from nicotinate D-ribonucleotide: step 1/1. Its function is as follows. Catalyzes the reversible adenylation of nicotinate mononucleotide (NaMN) to nicotinic acid adenine dinucleotide (NaAD). In Escherichia coli O45:K1 (strain S88 / ExPEC), this protein is Probable nicotinate-nucleotide adenylyltransferase.